The primary structure comprises 436 residues: Transcriptional regulator VdtR (436 aa).

A DNA-binding region (zn(2)-C6 fungal-type) is located at residues 17–44 (CDRCSANKVKCTQEKPECERCRLLSLPC). Disordered stretches follow at residues 51-147 (RIGK…HDKG) and 173-192 (TARE…EYSD). The segment covering 125–141 (SHNSNRPTNMASTNQDQ) has biased composition (polar residues). Residues 174–192 (AREDQKQHPELRSEEEYSD) show a composition bias toward basic and acidic residues.

It localises to the nucleus. In terms of biological role, transcription factor that regulates expression of the viriditoxin biosynthesis cluster and viriditoxin synthesis. In Byssochlamys spectabilis (Paecilomyces variotii), this protein is Transcriptional regulator VdtR.